Consider the following 226-residue polypeptide: tRNA (guanine-N(1)-)-methyltransferase (226 aa).

S-adenosyl-L-methionine-binding positions include Gly-110 and 130 to 135 (IGDFIL).

This sequence belongs to the RNA methyltransferase TrmD family. Homodimer.

Its subcellular location is the cytoplasm. It catalyses the reaction guanosine(37) in tRNA + S-adenosyl-L-methionine = N(1)-methylguanosine(37) in tRNA + S-adenosyl-L-homocysteine + H(+). In terms of biological role, specifically methylates guanosine-37 in various tRNAs. This is tRNA (guanine-N(1)-)-methyltransferase from Nitratiruptor sp. (strain SB155-2).